The primary structure comprises 72 residues: Translation initiation factor IF-1 (72 aa).

Positions 1-72 (MAKEDSIEMQ…SKGRIVFRSR (72 aa)) constitute an S1-like domain.

The protein belongs to the IF-1 family. In terms of assembly, component of the 30S ribosomal translation pre-initiation complex which assembles on the 30S ribosome in the order IF-2 and IF-3, IF-1 and N-formylmethionyl-tRNA(fMet); mRNA recruitment can occur at any time during PIC assembly.

It localises to the cytoplasm. Its function is as follows. One of the essential components for the initiation of protein synthesis. Stabilizes the binding of IF-2 and IF-3 on the 30S subunit to which N-formylmethionyl-tRNA(fMet) subsequently binds. Helps modulate mRNA selection, yielding the 30S pre-initiation complex (PIC). Upon addition of the 50S ribosomal subunit IF-1, IF-2 and IF-3 are released leaving the mature 70S translation initiation complex. The protein is Translation initiation factor IF-1 of Aeromonas hydrophila subsp. hydrophila (strain ATCC 7966 / DSM 30187 / BCRC 13018 / CCUG 14551 / JCM 1027 / KCTC 2358 / NCIMB 9240 / NCTC 8049).